We begin with the raw amino-acid sequence, 185 residues long: Elongation factor P (185 aa).

Belongs to the elongation factor P family.

It localises to the cytoplasm. Its pathway is protein biosynthesis; polypeptide chain elongation. Functionally, involved in peptide bond synthesis. Stimulates efficient translation and peptide-bond synthesis on native or reconstituted 70S ribosomes in vitro. Probably functions indirectly by altering the affinity of the ribosome for aminoacyl-tRNA, thus increasing their reactivity as acceptors for peptidyl transferase. The polypeptide is Elongation factor P (Clostridium botulinum (strain ATCC 19397 / Type A)).